The chain runs to 179 residues: Probable mitochondrial import inner membrane translocase subunit Tim17 1 (179 aa).

The next 3 helical transmembrane spans lie at 17 to 37 (CGGAFAMGALGGGAFQAIKGF), 61 to 81 (LVGGNFAVWGATFSAIDCSLV), and 113 to 133 (LSSALVGGALLALIEGVGIVV).

It belongs to the Tim17/Tim22/Tim23 family. In terms of assembly, component of the TIM23 complex at least composed of Tim23, Tim17 (Tim17a1, Tim17a2 or Tim17b1) and a Tim50. The complex interacts with the Tim44 component of the PAM complex.

The protein localises to the mitochondrion inner membrane. In terms of biological role, essential component of the TIM23 complex, a complex that mediates the translocation of transit peptide-containing proteins across the mitochondrial inner membrane. The polypeptide is Probable mitochondrial import inner membrane translocase subunit Tim17 1 (Tim17b1) (Drosophila melanogaster (Fruit fly)).